We begin with the raw amino-acid sequence, 1463 residues long: DNA polymerase III PolC-type (1463 aa).

In terms of domain architecture, Exonuclease spans 425–581; the sequence is YVVFDVETTG…YDAEATGRLL (157 aa).

Belongs to the DNA polymerase type-C family. PolC subfamily.

The protein localises to the cytoplasm. The catalysed reaction is DNA(n) + a 2'-deoxyribonucleoside 5'-triphosphate = DNA(n+1) + diphosphate. Functionally, required for replicative DNA synthesis. This DNA polymerase also exhibits 3' to 5' exonuclease activity. This is DNA polymerase III PolC-type from Streptococcus suis (strain 98HAH33).